The sequence spans 244 residues: Coenzyme Q-binding protein COQ10 homolog B, mitochondrial (244 aa).

Belongs to the COQ10 family. In terms of assembly, interacts with coenzyme Q.

The protein resides in the mitochondrion inner membrane. Its function is as follows. Required for the function of coenzyme Q in the respiratory chain. May serve as a chaperone or may be involved in the transport of Q6 from its site of synthesis to the catalytic sites of the respiratory complexes. This Xenopus laevis (African clawed frog) protein is Coenzyme Q-binding protein COQ10 homolog B, mitochondrial (coq10b).